The chain runs to 490 residues: Transmembrane protease serine 2 (490 aa).

Residues 1 to 83 lie on the Cytoplasmic side of the membrane; sequence MALNSGSPPG…ALCTSKSKKS (83 aa). The chain crosses the membrane as a helical; Signal-anchor for type II membrane protein span at residues 84–104; that stretch reads LCLALALGTVLTGAAVAAVLL. At 105 to 490 the chain is on the extracellular side; sequence WRFWDSNCST…WIYQQMRANS (386 aa). N-linked (GlcNAc...) asparagine glycosylation is present at N111. In terms of domain architecture, LDL-receptor class A spans 111–149; sequence NCSTSEMECGSSGTCISSSLWCDGVAHCPNGEDENRCVR. Intrachain disulfides connect C112–C125, C119–C138, C132–C147, C171–C230, C184–C240, C243–C363, C279–C295, C408–C424, and C435–C463. Positions 133, 135, 143, and 144 each coordinate Ca(2+). Positions 150 to 242 constitute an SRCR domain; that stretch reads LYGQSFILQV…RMVVSLRCIE (93 aa). N212 carries an N-linked (GlcNAc...) asparagine glycan. The 234-residue stretch at 254 to 487 folds into the Peptidase S1 domain; it reads IVGGLNASPG…FTDWIYQQMR (234 aa). Residues H294 and D343 each act as charge relay system in the active site. S439 serves as the catalytic Charge relay system. Residue N474 is glycosylated (N-linked (GlcNAc...) asparagine).

This sequence belongs to the peptidase S1 family. As to quaternary structure, the catalytically active form interacts with ACE2. In terms of processing, proteolytically processed; by an autocatalytic mechanism. Autocleavage induces active conformation. As to expression, larynx, trachea and bronchi, lung, prostate and kidney.

The protein localises to the cell membrane. It is found in the secreted. It catalyses the reaction The enzyme cleaves angiotensin-converting enzyme 2 (EC 3.4.17.23) and cleaves influenzea A and B virus and coronavirus spike glycoproteins at arginine residues.. Functionally, plasma membrane-anchored serine protease that cleaves at arginine residues. Participates in proteolytic cascades of relevance for the normal physiologic function of the prostate. Androgen-induced TMPRSS2 activates several substrates that include pro-hepatocyte growth factor/HGF, the protease activated receptor-2/F2RL1 or matriptase/ST14 leading to extracellular matrix disruption. In addition, activates trigeminal neurons and contribute to both spontaneous pain and mechanical allodynia. In terms of biological role, (Microbial infection) Essential for spread and pathogenesis of influenza A virus (strains H1N1, H3N2 and H7N9) and is involved in proteolytic cleavage and activation of hemagglutinin (HA) protein which is essential for viral infectivity. This is Transmembrane protease serine 2 (Tmprss2) from Mus musculus (Mouse).